Consider the following 259-residue polypeptide: Haloacid dehalogenase-like hydrolase domain-containing protein 2 (259 aa).

Residues D13 and S15 each coordinate Mg(2+). Residues 13-15 and 46-47 each bind substrate; these read DLS and TN. The stretch at 47 to 71 forms a coiled coil; the sequence is NTTKESKQDLLERLRKLEFDISEDE. Residue K50 is modified to N6-succinyllysine. K179 contacts substrate. Position 204 (D204) interacts with Mg(2+).

The protein belongs to the HAD-like hydrolase superfamily. Mg(2+) is required as a cofactor.

The chain is Haloacid dehalogenase-like hydrolase domain-containing protein 2 (HDHD2) from Pongo abelii (Sumatran orangutan).